We begin with the raw amino-acid sequence, 596 residues long: Serine/threonine-protein kinase PknH (596 aa).

Residues 1–373 (MSDAQDSRVG…QTPRKTNPWP (373 aa)) lie on the Cytoplasmic side of the membrane. Positions 16–276 (YHLKRLLGRG…DLALAAHEAL (261 aa)) constitute a Protein kinase domain. ATP contacts are provided by residues 22–30 (LGRGGMGEV) and Lys45. The Proton acceptor role is filled by Asp139. A Phosphothreonine modification is found at Thr170. Residues 292 to 368 (QESTLPGTAA…PSPWAQTPRK (77 aa)) are disordered. The span at 307 to 318 (PTMPTVTPPPIQ) shows a compositional bias: pro residues. The helical transmembrane segment at 374 to 394 (LVAGAAAVVLVLVLGAIGIWI) threads the bilayer. The Extracellular portion of the chain corresponds to 395-596 (ANRPKPVQPP…AKIVDKVNKE (202 aa)).

The protein belongs to the protein kinase superfamily. Ser/Thr protein kinase family. Autophosphorylated on threonine and serine residues.

It localises to the cell membrane. It carries out the reaction L-seryl-[protein] + ATP = O-phospho-L-seryl-[protein] + ADP + H(+). The enzyme catalyses L-threonyl-[protein] + ATP = O-phospho-L-threonyl-[protein] + ADP + H(+). The polypeptide is Serine/threonine-protein kinase PknH (pknH) (Mycobacterium bovis (strain ATCC BAA-935 / AF2122/97)).